Consider the following 426-residue polypeptide: Chaperone SurA (426 aa).

The N-terminal stretch at 1–13 is a signal peptide; it reads MLGALFLGTAANA. 2 PpiC domains span residues 164–265 and 274–373; these read SEEL…KLLE and RDEV…EVLG.

It is found in the periplasm. The enzyme catalyses [protein]-peptidylproline (omega=180) = [protein]-peptidylproline (omega=0). Functionally, chaperone involved in the correct folding and assembly of outer membrane proteins. Recognizes specific patterns of aromatic residues and the orientation of their side chains, which are found more frequently in integral outer membrane proteins. May act in both early periplasmic and late outer membrane-associated steps of protein maturation. The sequence is that of Chaperone SurA from Pseudomonas fluorescens (strain Pf0-1).